Consider the following 202-residue polypeptide: Dephospho-CoA kinase (202 aa).

Residues 5 to 202 (VIGLTGGIGS…KKYLTLTKMV (198 aa)) form the DPCK domain. 13-18 (GSGKTT) serves as a coordination point for ATP.

Belongs to the CoaE family.

Its subcellular location is the cytoplasm. It carries out the reaction 3'-dephospho-CoA + ATP = ADP + CoA + H(+). It functions in the pathway cofactor biosynthesis; coenzyme A biosynthesis; CoA from (R)-pantothenate: step 5/5. Functionally, catalyzes the phosphorylation of the 3'-hydroxyl group of dephosphocoenzyme A to form coenzyme A. This Colwellia psychrerythraea (strain 34H / ATCC BAA-681) (Vibrio psychroerythus) protein is Dephospho-CoA kinase.